The sequence spans 883 residues: Valine--tRNA ligase (883 aa).

Positions 52–62 match the 'HIGH' region motif; it reads PNVTGRLHLGH. Positions 529 to 533 match the 'KMSKS' region motif; that stretch reads KMSKS. ATP is bound at residue Lys532. A coiled-coil region spans residues 813 to 848; it reads LEGLIDFDKEIKRLENELAKWTKEVERVQKKLSNQG.

It belongs to the class-I aminoacyl-tRNA synthetase family. ValS type 1 subfamily. As to quaternary structure, monomer.

It is found in the cytoplasm. It catalyses the reaction tRNA(Val) + L-valine + ATP = L-valyl-tRNA(Val) + AMP + diphosphate. In terms of biological role, catalyzes the attachment of valine to tRNA(Val). As ValRS can inadvertently accommodate and process structurally similar amino acids such as threonine, to avoid such errors, it has a 'posttransfer' editing activity that hydrolyzes mischarged Thr-tRNA(Val) in a tRNA-dependent manner. The chain is Valine--tRNA ligase from Oceanobacillus iheyensis (strain DSM 14371 / CIP 107618 / JCM 11309 / KCTC 3954 / HTE831).